Consider the following 487-residue polypeptide: Probable cobyric acid synthase (487 aa).

One can recognise a GATase cobBQ-type domain in the interval 249–435; the sequence is DVDIAVVRFP…LHGIFNNASF (187 aa). Cysteine 328 functions as the Nucleophile in the catalytic mechanism. Histidine 427 is an active-site residue.

Belongs to the CobB/CobQ family. CobQ subfamily.

Its pathway is cofactor biosynthesis; adenosylcobalamin biosynthesis. In terms of biological role, catalyzes amidations at positions B, D, E, and G on adenosylcobyrinic A,C-diamide. NH(2) groups are provided by glutamine, and one molecule of ATP is hydrogenolyzed for each amidation. In Methanocella arvoryzae (strain DSM 22066 / NBRC 105507 / MRE50), this protein is Probable cobyric acid synthase.